The primary structure comprises 1706 residues: Cadherin-99C (1706 aa).

An N-terminal signal peptide occupies residues 1-28; the sequence is MAARNSLTPQQGLGFFGLLILLCSAVLG. Residues 29–1395 lie on the Extracellular side of the membrane; sequence KSQMCEVETG…AIDNEVFPFT (1367 aa). Cadherin domains are found at residues 68–142, 143–264, 277–387, 388–500, 519–604, 605–704, 707–807, 808–908, 909–1005, 1038–1148, and 1156–1270; these read DPDT…APRF, MNTP…DPSF, INPE…PPVI, SSSQ…APKL, VTQV…PPRF, QKPI…NPEF, STLP…VPKF, SDAR…PPRF, ITVP…RVDV, SDDS…APEF, and QQDT…ALSF. Asparagine 105 and asparagine 188 each carry an N-linked (GlcNAc...) asparagine glycan. Asparagine 442, asparagine 553, asparagine 620, and asparagine 753 each carry an N-linked (GlcNAc...) asparagine glycan. N-linked (GlcNAc...) asparagine glycans are attached at residues asparagine 1053, asparagine 1088, and asparagine 1108. N-linked (GlcNAc...) asparagine glycosylation is found at asparagine 1311 and asparagine 1367. Residues 1396–1416 form a helical membrane-spanning segment; sequence LIAISLVILILGTIGIIYICI. Residues 1417–1706 are Cytoplasmic-facing; it reads SWSKYKNFKQ…RSEVETTTEL (290 aa).

In terms of assembly, interacts (via the cytoplasmic domain) with ck. Interacts (via the cytoplasmic domain) with Cul1 and Ubr3.

The protein resides in the apical cell membrane. The protein localises to the endosome membrane. It localises to the cell projection. Its subcellular location is the microvillus membrane. Functionally, cadherin that functions in epithelial morphogenesis and the intestine epithelial immune response. Essential for female fertility. Regulates the length and organization of apical microvilli in developing follicle cells and salivary glands. Function in the follicle cell is essential for egg development as the microvilli secrete eggshell material such as the vitelline membrane. Acts at least in part by regulating the recruitment of the myosin ck to the follicle cell microvilli. Also required to regulate cell rearrangements during salivary tube elongation, possibly by modulating cellular adhesion between the apical surface and apical extracellular matrix during epithelial tube elongation. May also function in cellular adhesion during the development of other tubular epithelia such as the trachea. Possibly functions as an apical membrane determinant which acts in apical membrane expansion during salivary and tracheal epithelial tube elongation. In salivary gland development, this function is independent of the other apical membrane determinants crb and sas. Essential downstream component of a hh-signaling pathway which regulates the Duox-dependent gut epithelial immune response to bacterial uracil; required for endosome formation in the enterocyte and activating norpA-dependent Ca2+ mobilization, which are essential steps in the Duox-dependent production of reactive oxygen species (ROS) in response to intestinal bacterial infection. The chain is Cadherin-99C from Drosophila melanogaster (Fruit fly).